The following is a 266-amino-acid chain: 22 kDa alpha-zein 8 (266 aa).

The first 21 residues, 1-21, serve as a signal peptide directing secretion; that stretch reads MATKILALLALLALFVSATNA.

This sequence belongs to the zein family.

In terms of biological role, zeins are major seed storage proteins. In Zea mays (Maize), this protein is 22 kDa alpha-zein 8.